The sequence spans 398 residues: Probable aminomethyltransferase (398 aa).

Belongs to the GcvT family. In terms of assembly, the glycine cleavage system is composed of four proteins: P, T, L and H.

It catalyses the reaction N(6)-[(R)-S(8)-aminomethyldihydrolipoyl]-L-lysyl-[protein] + (6S)-5,6,7,8-tetrahydrofolate = N(6)-[(R)-dihydrolipoyl]-L-lysyl-[protein] + (6R)-5,10-methylene-5,6,7,8-tetrahydrofolate + NH4(+). In terms of biological role, the glycine cleavage system catalyzes the degradation of glycine. The protein is Probable aminomethyltransferase of Thermococcus gammatolerans (strain DSM 15229 / JCM 11827 / EJ3).